An 847-amino-acid polypeptide reads, in one-letter code: Alpha-glucuronidase A (847 aa).

The N-terminal stretch at 1–22 (MRSFLLLTALLGVAAVAEDGLA) is a signal peptide. N-linked (GlcNAc...) asparagine glycosylation is found at Asn-48, Asn-78, Asn-227, Asn-315, Asn-349, Asn-457, Asn-472, Asn-534, Asn-583, Asn-689, Asn-738, Asn-739, and Asn-769.

Belongs to the glycosyl hydrolase 67 family.

Its subcellular location is the secreted. It carries out the reaction an alpha-D-glucuronoside + H2O = D-glucuronate + an alcohol. In terms of biological role, alpha-glucuronidase involved in the hydrolysis of xylan, a major structural heterogeneous polysaccharide found in plant biomass representing the second most abundant polysaccharide in the biosphere, after cellulose. Releases 4-O-methylglucuronic acid from xylan. The chain is Alpha-glucuronidase A (aguA) from Emericella nidulans (strain FGSC A4 / ATCC 38163 / CBS 112.46 / NRRL 194 / M139) (Aspergillus nidulans).